An 86-amino-acid chain; its full sequence is Small ribosomal subunit protein bS16 (86 aa).

Belongs to the bacterial ribosomal protein bS16 family.

The polypeptide is Small ribosomal subunit protein bS16 (Myxococcus xanthus (strain DK1622)).